A 346-amino-acid chain; its full sequence is Elongation factor Ts (346 aa).

Positions 80-83 are involved in Mg(2+) ion dislocation from EF-Tu; sequence TDFV.

This sequence belongs to the EF-Ts family.

It localises to the cytoplasm. Functionally, associates with the EF-Tu.GDP complex and induces the exchange of GDP to GTP. It remains bound to the aminoacyl-tRNA.EF-Tu.GTP complex up to the GTP hydrolysis stage on the ribosome. In Streptococcus pneumoniae serotype 19F (strain G54), this protein is Elongation factor Ts.